Reading from the N-terminus, the 153-residue chain is ORM1-like protein 2 (153 aa).

Residues 1–21 (MNVGVAHSEVNPNTRVMNSRG) lie on the Cytoplasmic side of the membrane. A run of 2 helical transmembrane segments spans residues 22–42 (IWLA…SIPF) and 43–63 (FSIP…MYVF). Topologically, residues 64–105 (LHTVKGTPFETPDQGKARLLTHWEQMDYGLQFTSSRKFLSIS) are cytoplasmic. Residues 106–126 (PIVLYLLASFYTKYDAAHFLI) form a helical membrane-spanning segment. Over 127–153 (NTASLLSVLLPKLPQFHGVRLFGINKY) the chain is Extracellular.

Belongs to the ORM family. Ceramide-sensitive subunit of the serine palmitoyltransferase (SPT) complex, which is also composed of SPTLC1, SPTLC2/3 and SPTSSA/B.

Its subcellular location is the endoplasmic reticulum membrane. Functionally, plays an essential role in the homeostatic regulation of sphingolipid de novo biosynthesis by modulating the activity of the serine palmitoyltransferase (SPT) in response to ceramide levels. When complexed to SPT, the binding of ceramides to its N-terminus stabilizes a conformation that block SPT substrate entry, hence preventing SPT catalytic activity. Through this mechanism, maintains ceramide levels at sufficient concentrations for the production of complex sphingolipids, but which prevents the accumulation of ceramides to levels that trigger apoptosis. The sequence is that of ORM1-like protein 2 (ORMDL2) from Bos taurus (Bovine).